Consider the following 286-residue polypeptide: Polyamine aminopropyltransferase (286 aa).

The PABS domain occupies 9–242 (NGWIDEHHQG…GWWSWTFAAI (234 aa)). An S-methyl-5'-thioadenosine-binding site is contributed by Q36. Spermidine contacts are provided by H67 and D91. S-methyl-5'-thioadenosine contacts are provided by residues E111 and 143–144 (NG). Catalysis depends on D162, which acts as the Proton acceptor. Residue P169 participates in S-methyl-5'-thioadenosine binding.

Belongs to the spermidine/spermine synthase family. In terms of assembly, homodimer or homotetramer.

It localises to the cytoplasm. It catalyses the reaction S-adenosyl 3-(methylsulfanyl)propylamine + putrescine = S-methyl-5'-thioadenosine + spermidine + H(+). Its pathway is amine and polyamine biosynthesis; spermidine biosynthesis; spermidine from putrescine: step 1/1. Catalyzes the irreversible transfer of a propylamine group from the amino donor S-adenosylmethioninamine (decarboxy-AdoMet) to putrescine (1,4-diaminobutane) to yield spermidine. In Prochlorococcus marinus (strain MIT 9313), this protein is Polyamine aminopropyltransferase.